The sequence spans 369 residues: Glutamine synthetase 2 cytoplasmic (369 aa).

A GS beta-grasp domain is found at 32–112; that stretch reads VQATYVWIDG…VMCDTYKFDG (81 aa). The region spanning 119 to 369 is the GS catalytic domain; that stretch reads KRKTCLEVAN…AILRTICLDE (251 aa).

The protein belongs to the glutamine synthetase family. Homooctamer.

The protein localises to the cytoplasm. The enzyme catalyses L-glutamate + NH4(+) + ATP = L-glutamine + ADP + phosphate + H(+). This chain is Glutamine synthetase 2 cytoplasmic (Gs2), found in Drosophila melanogaster (Fruit fly).